A 4646-amino-acid polypeptide reads, in one-letter code: Cytoplasmic dynein 1 heavy chain 1 (4646 aa).

Position 2 is an N-acetylserine (Ser-2). A stem region spans residues 53-1867; sequence EAALEEKSAL…SIQMANAKFN (1815 aa). Ser-70 is modified (phosphoserine). Coiled coils occupy residues 181–202, 455–478, and 543–566; these read SVEK…NIEI, AHRK…QLRA, and TEAW…RITA. Residues 448–703 are interaction with DYNC1I2; that stretch reads MVWRINPAHR…NTQEIFDDWA (256 aa). Residues 651 to 802 form an interaction with DYNC1LI2 region; the sequence is AKQIDRQLTA…EKVEERNTIS (152 aa). Lys-1125 carries the N6-acetyllysine modification. 2 coiled-coil regions span residues 1171–1252 and 1357–1373; these read TYVQ…AVES and RKLR…LKSF. A Phosphoserine modification is found at Ser-1230. 4 AAA regions span residues 1868-2099, 2180-2452, 2556-2805, and 2899-3168; these read YGFE…VLVS, EELK…LTRL, EVET…WVRG, and VFYE…GGRT. Residues 1906-1913 and 2224-2231 contribute to the ATP site; these read GPAGTGKT and GPSGSGKS. Residues 2390–2411 are disordered; sequence GEDEAQRRRKGKEDEGEEAASP. ATP contacts are provided by residues 2595–2602 and 2937–2944; these read GPPGSGKT and GVSGAGKT. Coiled-coil stretches lie at residues 3189–3275, 3396–3500, and 3737–3800; these read EKRS…ADKQ, AIAQ…KNQM, and EFQL…VSQQ. A stalk region spans residues 3189–3500; sequence EKRSELEEQQ…KTSETFKNQM (312 aa). Residue Lys-3480 is modified to N6-acetyllysine. AAA regions lie at residues 3553-3782 and 4005-4221; these read LSNA…EVTR and AHMF…TVDT. Ser-4162 carries the phosphoserine modification. N6-acetyllysine is present on Lys-4283. Residue Thr-4366 is modified to Phosphothreonine. Ser-4368 is subject to Phosphoserine.

This sequence belongs to the dynein heavy chain family. Homodimer. The cytoplasmic dynein 1 complex consists of two catalytic heavy chains (HCs) and a number of non-catalytic subunits presented by intermediate chains (ICs), light intermediate chains (LICs) and light chains (LCs); the composition seems to vary in respect to the IC, LIC and LC composition. The heavy chain homodimer serves as a scaffold for the probable homodimeric assembly of the respective non-catalytic subunits. The ICs and LICs bind directly to the HC dimer and dynein LCs assemble on the IC dimer. Interacts with DYNC1LI1; DYNC1LI1 and DYNC1LI2 bind mutually exclusive to DYNC1H1. Interacts with DYNC1LI2; DYNC1LI1 and DYNC1LI2 bind mutually exclusive to DYNC1H1. Interacts with DYNC1I2. Interacts with BICD2. Interacts with isoform 2 of CRACR2A. Interacts with DNALI1.

The protein resides in the cytoplasm. It localises to the cytoskeleton. Its function is as follows. Cytoplasmic dynein 1 acts as a motor for the intracellular retrograde motility of vesicles and organelles along microtubules. Dynein has ATPase activity; the force-producing power stroke is thought to occur on release of ADP. Plays a role in mitotic spindle assembly and metaphase plate congression. This chain is Cytoplasmic dynein 1 heavy chain 1, found in Homo sapiens (Human).